The sequence spans 152 residues: D-aminoacyl-tRNA deacylase (152 aa).

The short motif at 142–143 (GP) is the Gly-cisPro motif, important for rejection of L-amino acids element.

This sequence belongs to the DTD family. As to quaternary structure, homodimer.

It localises to the cytoplasm. It catalyses the reaction glycyl-tRNA(Ala) + H2O = tRNA(Ala) + glycine + H(+). It carries out the reaction a D-aminoacyl-tRNA + H2O = a tRNA + a D-alpha-amino acid + H(+). Functionally, an aminoacyl-tRNA editing enzyme that deacylates mischarged D-aminoacyl-tRNAs. Also deacylates mischarged glycyl-tRNA(Ala), protecting cells against glycine mischarging by AlaRS. Acts via tRNA-based rather than protein-based catalysis; rejects L-amino acids rather than detecting D-amino acids in the active site. By recycling D-aminoacyl-tRNA to D-amino acids and free tRNA molecules, this enzyme counteracts the toxicity associated with the formation of D-aminoacyl-tRNA entities in vivo and helps enforce protein L-homochirality. The protein is D-aminoacyl-tRNA deacylase of Paraburkholderia phymatum (strain DSM 17167 / CIP 108236 / LMG 21445 / STM815) (Burkholderia phymatum).